We begin with the raw amino-acid sequence, 248 residues long: Granzyme C (248 aa).

The first 18 residues, 1-18 (MPPVLILLTLLLPLRAGA), serve as a signal peptide directing secretion. The propeptide occupies 19 to 20 (EE). Residues 21-246 (IIGGNEISPH…FVSWIKKTMK (226 aa)) enclose the Peptidase S1 domain. Cys-50 and Cys-66 are disulfide-bonded. Catalysis depends on charge relay system residues His-65 and Asp-109. Disulfide bonds link Cys-143-Cys-210 and Cys-174-Cys-189. Ser-204 acts as the Charge relay system in catalysis.

This sequence belongs to the peptidase S1 family. Granzyme subfamily.

Its subcellular location is the cytolytic granule. Functionally, this enzyme is probably necessary for target cell lysis in cell-mediated immune responses. The chain is Granzyme C (Gzmc) from Mus musculus (Mouse).